Consider the following 449-residue polypeptide: Phosphoglucosamine mutase (449 aa).

Ser101 functions as the Phosphoserine intermediate in the catalytic mechanism. The Mg(2+) site is built by Ser101, Asp242, Asp244, and Asp246. Ser101 is subject to Phosphoserine.

It belongs to the phosphohexose mutase family. Mg(2+) serves as cofactor. Post-translationally, activated by phosphorylation.

The catalysed reaction is alpha-D-glucosamine 1-phosphate = D-glucosamine 6-phosphate. Catalyzes the conversion of glucosamine-6-phosphate to glucosamine-1-phosphate. The polypeptide is Phosphoglucosamine mutase (Bradyrhizobium sp. (strain BTAi1 / ATCC BAA-1182)).